The following is a 1021-amino-acid chain: MNLFNLDRFRFEKRSKIEEAPEAAPQPSQARPSSPISLSAEEENAEGEGSRANTPDSDVTEKTEDSSVPEPPDNERKASLSCFQNQRAIQEYIDLSSDTEDVSPNCSSTVQEKKFSKDTVIIVSEPSEDEESHDLPSVTRRNDSSELEDLSELEDLKDAKLQTLKELFPQRSDSDLLKLIESTSTMDGAIAAALLMFGDAGGGPRKRKLSSSSEEDDVNDDQSVKQPRGDRGEESNESAEASSNWEKQESIVLKLQKEFPNFDKQELREVLKEHEWMYTEALESLKVFAEDQDVQCASQSEVTNGKEVARNQNYSKNATKIKMKQKISVKPQNGFNKKRKKNVFNPKKAVEDSEYDSGSDAGSSLDEDYSSCEEVMEDGYKGKILHFLQVSSIAELTLIPKCSQKKAQKITELRPFNNWEALFTKMSKINGLSEDLIWNCKTVIQERDVVIRLMNKCEDISNKLTKQVTMLTGNGGGWNREQPSLLNQSLSLKPYQKVGLNWLALVHKHGLNGILADEMGLGKTIQAIAFLAYLFQEGNKGPHLIVVPASTIDNWLREVNLWCPSLNVLCYYGSQEERKQIRFNIHNKYEDYNVIVTTYNCAISSSDDRSLFRRLKLNYAIFDEGHMLKNMGSIRYQHLMTINARNRLLLTGTPVQNNLLELMSLLNFVMPHMFSSSTSEIRRMFSSKTKPADEQSIYEKERIAHAKQIIKPFILRRVKEEVLKLLPPKKDRIELCAMSEKQEQLYSGLFNRLKKSINNLEKNTEMCNVMMQLRKMANHPLLHRQYYTPEKLKEMSQLMLKEPTHCEANPDLIFEDMEVMTDFELHVLCKQYQHINSYQLDMDLILDSGKFRALGCILSELKQKGDRVVLFSQFTMMLDILEVLLKHHQHRYLRLDGKTQISERIHLIDEFNTDMDIFVFLLSTKAGGLGINLTSANVVILHDIDCNPYNDKQAEDRCHRVGQTKEVLVIKLISQGTIEESMLKINQQKLKLEQDMTTVDEADEGSMPADIATLLKTSMGL.

The residue at position 1 (methionine 1) is an N-acetylmethionine. Disordered stretches follow at residues 1–82 (MNLF…SLSC) and 124–151 (SEPSEDEESHDLPSVTRRNDSSELEDLS). Basic and acidic residues predominate over residues 7-19 (DRFRFEKRSKIEE). Residues 22-39 (EAAPQPSQARPSSPISLS) are compositionally biased toward low complexity. Position 54 is a phosphothreonine (threonine 54). The residue at position 57 (serine 57) is a Phosphoserine. A Glycyl lysine isopeptide (Lys-Gly) (interchain with G-Cter in SUMO2) cross-link involves residue lysine 77. Phosphoserine occurs at positions 79, 124, 127, 132, 144, 145, and 151. In terms of domain architecture, CUE 1 spans 156 to 198 (LKDAKLQTLKELFPQRSDSDLLKLIESTSTMDGAIAAALLMFG). The segment at 201 to 246 (GGGPRKRKLSSSSEEDDVNDDQSVKQPRGDRGEESNESAEASSNWE) is disordered. 4 positions are modified to phosphoserine: serine 210, serine 213, serine 235, and serine 238. The CUE 2 domain maps to 247-290 (KQESIVLKLQKEFPNFDKQELREVLKEHEWMYTEALESLKVFAE). Serine 298 is modified (phosphoserine). The tract at residues 329 to 366 (VKPQNGFNKKRKKNVFNPKKAVEDSEYDSGSDAGSSLD) is disordered. Glycyl lysine isopeptide (Lys-Gly) (interchain with G-Cter in SUMO2) cross-links involve residues lysine 330 and lysine 466. The Helicase ATP-binding domain maps to 504–672 (ALVHKHGLNG…MSLLNFVMPH (169 aa)). ATP is bound at residue 516–524 (ADEMGLGKT). Positions 623-626 (DEGH) match the DEGH box motif. Residues 716-733 (RRVKEEVLKLLPPKKDRI) carry the Nuclear localization signal motif. Lysine 719 participates in a covalent cross-link: Glycyl lysine isopeptide (Lys-Gly) (interchain with G-Cter in SUMO2). One can recognise a Helicase C-terminal domain in the interval 853–1005 (ALGCILSELK…MTTVDEADEG (153 aa)). Residue 892 to 899 (YLRLDGKT) coordinates ATP. A Glycyl lysine isopeptide (Lys-Gly) (interchain with G-Cter in SUMO2) cross-link involves residue lysine 991. A DEAD box motif is present at residues 1000 to 1003 (DEAD).

This sequence belongs to the SNF2/RAD54 helicase family. In terms of assembly, binds to DNA preferentially in the vicinity of transcriptional start sites. Interacts with MSH2 and TRIM28. Part of a complex composed of TRIM28, HDAC1, HDAC2 and EHMT2. Interacts with PCNA.

Its subcellular location is the nucleus. The protein localises to the chromosome. The enzyme catalyses ATP + H2O = ADP + phosphate + H(+). Functionally, DNA helicase that possesses intrinsic ATP-dependent nucleosome-remodeling activity and is both required for DNA repair and heterochromatin organization. Promotes DNA end resection of double-strand breaks (DSBs) following DNA damage: probably acts by weakening histone DNA interactions in nucleosomes flanking DSBs. Required for the restoration of heterochromatin organization after replication. Acts at replication sites to facilitate the maintenance of heterochromatin by directing H3 and H4 histones deacetylation, H3 'Lys-9' trimethylation (H3K9me3) and restoration of silencing. The protein is SWI/SNF-related matrix-associated actin-dependent regulator of chromatin subfamily A containing DEAD/H box 1 (Smarcad1) of Mus musculus (Mouse).